A 1374-amino-acid chain; its full sequence is MAAPNRDPPGYRYAAAMVPTGSLLSTIEVASHRRLFDFFSRVRSDANSLYDVEFDALLGSYCNTLSLVRFLELGLSVACVCTKFPELAYMNEGRVQFEVHQPLIARDGPHPIEQPTHNYMTKIIDRRALNAAFSLATEAIALLTGEALDGTGIGAHRQLRAIQQLARNVQAVLGAFERGTADQMLHVLLEKAPPLALLLPMQRYLDNGRLATRVARATLVAELKRSFCETSFFLGKAGHRREAVEAWLVDLTTATQPSVAVPRLTHADTRGRPVDGVLVTTAPIKQRLLQSFLKVEDTEADVPVTYGEMVLNGANLVTALVMGKAVRSLDDVGRHLLEMQEEQLDLNRQTLDELESAPQTTRVRADLVSIGEKLVFLEALEKRIYAATNVPYPLVGAMDLTFVLPLGLFNPVMERFAAHAGDLVPAPGHPDPRAFPPRQLFFWGKDRQVLRLSLEHAIGTVCHPSLMNVDAAVGGLNRDPVEAANPYGAYVAAPAGPAADMQQLFLNAWGQRLAHGRVRWVAEGQMTPEQFMQPDNANLALELHPAFDFFVGVADVELPGGDVPPAGPGEIQATWRVVNGNLPLALCPAAFRDARGLELGVGRHAMAPATIAAVRGAFDDRNYPAVFYLLQAAIHGSEHVFCALARLVVQCITSYWNNTRCAAFVNDYSLVSYVVTYLGGDLPEECMAVYRDLVAHVEALAQLVDDFTLTGPELGGQAQAELNHLMRDPALLPPLVWDCDALMRRAALDRHRDCRVSAGGHDPVYAAACNVATADFNRNDGQLLHNTQARAADAADDRPHRGADWTVHHKIYYYVMVPAFSRGRCCTAGVRFDRVYATLQNMVVPEIAPGEECPSDPVTDPAHPLHPANLVANTVNAMFHNGRVVVDGPAMLTLQVLAHNMAERTTALLCSAAPDAGANTASTTNMRIFDGALHAGILLMAPQHLDHTIQNGDYFYPLPVHALFAGADHVANAPNFPPALRDLSRQVPLVPPALGANYFSSIRQPVVQHVRESAAGENALTYALMAGYFKISPVALHHQLKTGLHPGFGFTVVRQDRFVTENVLFSERASEAYFLGQLQVARHETGGGVNFTLTQPRANVDLGVGYTAVVATATVRNPVTDMGNLPQNFYLGRGAPPLLDNAAAVYLRNAVVAGNRLGPAQPVPVFGCAQVPRRAGMDHGQDAVCEFIATPVSTDVNYFRRPCNPRGRAAGGVYAGDKEGDVTALMYDHGQSDPSRAFAATANPWASQRFSYGDLLYNGAYHLNGASPVLSPCFKFFTSADIAAKHRCLERLIVETGSAVSTATAASDVQFKRPPGCRELVEDPCGLFQEAYPLTCASDPALLRSARNGEAHARETHFAQYLVYDASPLKGLAL.

It belongs to the herpesviridae major capsid protein family. As to quaternary structure, homomultimer. Makes the hexons and eleven out of twelve pentons. Interacts with triplex proteins 1/TRX1 and 2/TRX2; adjacent capsomers are linked together in groups of three by triplexes, heterotrimeric complexes composed of one molecule of TRX1 and two molecules of TRX2. Interacts with scaffold protein; this interaction allows efficient MCP transport to the host nucleus. Interacts with capsid vertex component 2/CVC2. Interacts with the small capsomere-interacting protein/SCP.

Its subcellular location is the virion. It is found in the host nucleus. Functionally, self-assembles to form an icosahedral capsid with a T=16 symmetry, about 200 nm in diameter, and consisting of 150 hexons and 12 pentons (total of 162 capsomers). Hexons form the edges and faces of the capsid and are each composed of six MCP molecules. In contrast, one penton is found at each of the 12 vertices. Eleven of the pentons are MCP pentamers, while the last vertex is occupied by the portal complex. The capsid is surrounded by a layer of proteinaceous material designated the tegument which, in turn, is enclosed in an envelope of host cell-derived lipids containing virus-encoded glycoproteins. The protein is Major capsid protein of Homo sapiens (Human).